Here is a 320-residue protein sequence, read N- to C-terminus: Cytochrome f (320 aa).

A signal peptide spans 1-35 (MQNRNTFSWVKEPINRSISVLIIIYVITQTSISNA). Tyrosine 36, cysteine 56, cysteine 59, and histidine 60 together coordinate heme. A helical transmembrane segment spans residues 286 to 306 (VQGLLFFLASVTLAQIFLVLK).

It belongs to the cytochrome f family. In terms of assembly, the 4 large subunits of the cytochrome b6-f complex are cytochrome b6, subunit IV (17 kDa polypeptide, petD), cytochrome f and the Rieske protein, while the 4 small subunits are PetG, PetL, PetM and PetN. The complex functions as a dimer. Requires heme as cofactor.

It localises to the plastid. It is found in the chloroplast thylakoid membrane. Component of the cytochrome b6-f complex, which mediates electron transfer between photosystem II (PSII) and photosystem I (PSI), cyclic electron flow around PSI, and state transitions. In Piper cenocladum (Ant piper), this protein is Cytochrome f.